A 384-amino-acid chain; its full sequence is UDP-N-acetylglucosamine--N-acetylmuramyl-(pentapeptide) pyrophosphoryl-undecaprenol N-acetylglucosamine transferase (384 aa).

Residues 17-19 (TGG), Asn131, Arg172, Ser200, and Gln301 contribute to the UDP-N-acetyl-alpha-D-glucosamine site.

It belongs to the glycosyltransferase 28 family. MurG subfamily.

It is found in the cell inner membrane. The enzyme catalyses di-trans,octa-cis-undecaprenyl diphospho-N-acetyl-alpha-D-muramoyl-L-alanyl-D-glutamyl-meso-2,6-diaminopimeloyl-D-alanyl-D-alanine + UDP-N-acetyl-alpha-D-glucosamine = di-trans,octa-cis-undecaprenyl diphospho-[N-acetyl-alpha-D-glucosaminyl-(1-&gt;4)]-N-acetyl-alpha-D-muramoyl-L-alanyl-D-glutamyl-meso-2,6-diaminopimeloyl-D-alanyl-D-alanine + UDP + H(+). It functions in the pathway cell wall biogenesis; peptidoglycan biosynthesis. In terms of biological role, cell wall formation. Catalyzes the transfer of a GlcNAc subunit on undecaprenyl-pyrophosphoryl-MurNAc-pentapeptide (lipid intermediate I) to form undecaprenyl-pyrophosphoryl-MurNAc-(pentapeptide)GlcNAc (lipid intermediate II). This chain is UDP-N-acetylglucosamine--N-acetylmuramyl-(pentapeptide) pyrophosphoryl-undecaprenol N-acetylglucosamine transferase, found in Granulibacter bethesdensis (strain ATCC BAA-1260 / CGDNIH1).